The sequence spans 3381 residues: Versican core protein (3381 aa).

An N-terminal signal peptide occupies residues 1–20 (MLINIKSILWMCSTLIAAHA). The 127-residue stretch at 21 to 147 (LQKVNMEKSP…EDTQDTVSLT (127 aa)) folds into the Ig-like V-type domain. 5 disulfides stabilise this stretch: Cys44–Cys131, Cys173–Cys244, Cys197–Cys218, Cys271–Cys346, and Cys295–Cys316. Residue Asn57 is glycosylated (N-linked (GlcNAc...) asparagine). Link domains lie at 151–246 (VVFH…YCYV) and 252–348 (DVFH…YCFK). Asn331 and Asn352 each carry an N-linked (GlcNAc...) asparagine glycan. The GAG-alpha (glucosaminoglycan attachment domain) stretch occupies residues 349-1336 (PKQNISEATT…IIEVRENKTG (988 aa)). Residues 417-427 (PLTSTHRSATE) are compositionally biased toward polar residues. Disordered regions lie at residues 417-437 (PLTS…SMKK) and 603-623 (ESVS…MDHR). An O-linked (Xyl...) (chondroitin sulfate) serine glycan is attached at Ser660. Residues 816 to 866 (DNTTSKPLGSTEHVGSPKLPPALITTTGVSGKDKEMPSLTEDGRDEFTRIP) are disordered. Asn817 carries an N-linked (GlcNAc...) asparagine glycan. Residues 846–863 (GKDKEMPSLTEDGRDEFT) show a composition bias toward basic and acidic residues. Asn965 and Asn1017 each carry an N-linked (GlcNAc...) asparagine glycan. Residues 1043 to 1052 (EDFLWKEQTP) are compositionally biased toward basic and acidic residues. 2 disordered regions span residues 1043 to 1081 (EDFL…SDGS) and 1218 to 1244 (FSSA…PDEE). N-linked (GlcNAc...) asparagine glycosylation occurs at Asn1333. The tract at residues 1337 to 3074 (RMSDFSVSGH…VEGTAVYLPG (1738 aa)) is GAG-beta. Residues 1338–1362 (MSDFSVSGHPIDSESKEDEPCSEET) are disordered. Residues 1352-1362 (SKEDEPCSEET) show a composition bias toward acidic residues. Asn1393 carries an N-linked (GlcNAc...) asparagine glycan. Residues 1417 to 1428 (KDPEAAEARRGQ) are compositionally biased toward basic and acidic residues. 3 disordered regions span residues 1417-1446 (KDPE…ESDS), 1455-1474 (GLPT…SLEI), and 1484-1512 (TAEP…GPDS). Residues Asn1437 and Asn1463 are each glycosylated (N-linked (GlcNAc...) asparagine). O-linked (Xyl...) (chondroitin sulfate) serine glycans are attached at residues Ser1539 and Ser1621. The N-linked (GlcNAc...) asparagine glycan is linked to Asn1653. Residues 1708-1785 (PPLEETTRKE…ERETTSSTVV (78 aa)) form a disordered region. Over residues 1712–1721 (ETTRKEEEKG) the composition is skewed to basic and acidic residues. Residues 1726-1738 (ASTVEVHSPTQRL) are compositionally biased toward polar residues. The span at 1743–1761 (SPSELESSSETPPDDSAAA) shows a compositional bias: low complexity. The span at 1764–1784 (KSFTSQMTPTQSERETTSSTV) shows a compositional bias: polar residues. O-linked (Xyl...) (chondroitin sulfate) serine glycans are attached at residues Ser1928 and Ser1952. Residues 1964–1976 (PSVTPTSDLSNHT) are compositionally biased toward polar residues. Disordered regions lie at residues 1964–1986 (PSVT…GSTL) and 2041–2126 (EGAI…QSSV). 4 N-linked (GlcNAc...) asparagine glycosylation sites follow: Asn1974, Asn2045, Asn2074, and Asn2103. Residues 2065-2075 (STEEGEVKENH) show a composition bias toward basic and acidic residues. Ser2109 carries the phosphoserine modification. O-linked (Xyl...) (chondroitin sulfate) serine glycosylation is found at Ser2240 and Ser2247. 3 N-linked (GlcNAc...) asparagine glycosylation sites follow: Asn2263, Asn2290, and Asn2356. 3 disordered regions span residues 2338–2388 (EGPF…AETK), 2490–2512 (EQRE…EKAT), and 2594–2615 (TDLD…TQVQ). 2 stretches are compositionally biased toward polar residues: residues 2345–2357 (LTFS…PQNQ) and 2367–2383 (TSRP…ENSV). A phosphoserine mark is found at Ser2607 and Ser2608. A Phosphothreonine modification is found at Thr2612. Asn2623 and Asn2641 each carry an N-linked (GlcNAc...) asparagine glycan. Ser2714, Ser2715, and Ser2759 each carry an O-linked (Xyl...) (chondroitin sulfate) serine glycan. The disordered stretch occupies residues 2819-2893 (PPLSIHLGSG…EPSEDESKPK (75 aa)). The segment covering 2840-2851 (ALPSTDASTPPV) has biased composition (polar residues). Residues Asn2919 and Asn3052 are each glycosylated (N-linked (GlcNAc...) asparagine). The EGF-like 1 domain maps to 3074-3110 (GPDRCKMNPCLNGGTCYPTETSYVCTCVPGYSGDRCE). 11 disulfides stabilise this stretch: Cys3078–Cys3089, Cys3083–Cys3098, Cys3100–Cys3109, Cys3116–Cys3127, Cys3121–Cys3136, Cys3138–Cys3147, Cys3154–Cys3165, Cys3182–Cys3274, Cys3250–Cys3266, Cys3281–Cys3324, and Cys3310–Cys3337. The EGF-like 2; calcium-binding domain occupies 3112–3148 (DFDECHSNPCRNGATCIDGFNTFRCLCLPSYVGALCE). A C-type lectin domain is found at 3161–3275 (FQGQCYKYFA…CNYHLTYTCK (115 aa)). The Sushi domain occupies 3279–3339 (VACGQPPVVE…WAMPKITCLN (61 aa)). N-linked (GlcNAc...) asparagine glycans are attached at residues Asn3354 and Asn3364. Polar residues predominate over residues 3355–3365 (SSSAKDNSINT). Residues 3355 to 3381 (SSSAKDNSINTSKHDHRWSRRWQESRR) form a disordered region.

It belongs to the aggrecan/versican proteoglycan family. Interacts with FBLN1. In terms of processing, phosphorylated by FAM20C in the extracellular medium. Proteolytically cleaved by ADAMTS5 and ADAMTS15 in the pericellular matrix surrounding myoblasts, facilitating myoblast contact and fusion which is required for skeletal muscle development and regeneration. Cerebral white matter. Isoform V0 and isoform V1 are expressed in the central nervous system, and in a number of mesenchymal and epithelial tissues; the major isoform V2 is restricted to the central nervous system.

It is found in the secreted. It localises to the extracellular space. The protein resides in the extracellular matrix. Its subcellular location is the cell projection. The protein localises to the cilium. It is found in the photoreceptor outer segment. It localises to the interphotoreceptor matrix. Its function is as follows. May play a role in intercellular signaling and in connecting cells with the extracellular matrix. May take part in the regulation of cell motility, growth and differentiation. Binds hyaluronic acid. This Bos taurus (Bovine) protein is Versican core protein (VCAN).